The primary structure comprises 245 residues: Eukaryotic translation initiation factor 3 subunit K (245 aa).

The 182-residue stretch at 46 to 227 (YDCYANLALL…EAKGTVVREN (182 aa)) folds into the PCI domain.

This sequence belongs to the eIF-3 subunit K family. In terms of assembly, component of the eukaryotic translation initiation factor 3 (eIF-3) complex.

Its subcellular location is the cytoplasm. Its function is as follows. Component of the eukaryotic translation initiation factor 3 (eIF-3) complex, which is involved in protein synthesis of a specialized repertoire of mRNAs and, together with other initiation factors, stimulates binding of mRNA and methionyl-tRNAi to the 40S ribosome. The eIF-3 complex specifically targets and initiates translation of a subset of mRNAs involved in cell proliferation. This is Eukaryotic translation initiation factor 3 subunit K from Phaeosphaeria nodorum (strain SN15 / ATCC MYA-4574 / FGSC 10173) (Glume blotch fungus).